The primary structure comprises 669 residues: DNA ligase (669 aa).

NAD(+) is bound by residues 34-38 (DAEYD), 83-84 (SL), and E114. K116 acts as the N6-AMP-lysine intermediate in catalysis. NAD(+) contacts are provided by R137, E171, K287, and K311. Zn(2+) contacts are provided by C405, C408, C423, and C428. The region spanning 591 to 669 (NVESYFAGKT…EERFLQELNK (79 aa)) is the BRCT domain.

Belongs to the NAD-dependent DNA ligase family. LigA subfamily. Mg(2+) serves as cofactor. It depends on Mn(2+) as a cofactor.

The catalysed reaction is NAD(+) + (deoxyribonucleotide)n-3'-hydroxyl + 5'-phospho-(deoxyribonucleotide)m = (deoxyribonucleotide)n+m + AMP + beta-nicotinamide D-nucleotide.. Its function is as follows. DNA ligase that catalyzes the formation of phosphodiester linkages between 5'-phosphoryl and 3'-hydroxyl groups in double-stranded DNA using NAD as a coenzyme and as the energy source for the reaction. It is essential for DNA replication and repair of damaged DNA. This chain is DNA ligase, found in Bacillus cereus (strain B4264).